Here is a 234-residue protein sequence, read N- to C-terminus: Probable glycerol uptake facilitator protein (234 aa).

The next 2 membrane-spanning stretches (helical) occupy residues 3–23 (VYLAEFLGTMLLIILGDGVVA) and 36–56 (GWIVITTGWGLAVAMSVYLVG). Positions 64–66 (NPA) match the NPA 1 motif. 3 consecutive transmembrane segments (helical) span residues 82 to 102 (VPGYIFSQILGAFVGAILVYL), 134 to 154 (LLTEIIGTMVLLMGVLGIGAN), and 164 to 184 (LVGFLVWSIGLSLGGPTGYAI). The NPA 2 signature appears at 185 to 187 (NPA). Residues 214 to 234 (VPIIGPIIGGILGASLYNWLF) form a helical membrane-spanning segment.

The protein belongs to the MIP/aquaporin (TC 1.A.8) family.

The protein localises to the cell membrane. It catalyses the reaction glycerol(in) = glycerol(out). Mediates glycerol diffusion across the cytoplasmic membrane via a pore-type mechanism. This chain is Probable glycerol uptake facilitator protein (glpF), found in Thermotoga maritima (strain ATCC 43589 / DSM 3109 / JCM 10099 / NBRC 100826 / MSB8).